Reading from the N-terminus, the 138-residue chain is Large ribosomal subunit protein uL16 (138 aa).

This sequence belongs to the universal ribosomal protein uL16 family. As to quaternary structure, part of the 50S ribosomal subunit.

In terms of biological role, binds 23S rRNA and is also seen to make contacts with the A and possibly P site tRNAs. This chain is Large ribosomal subunit protein uL16, found in Anaeromyxobacter sp. (strain Fw109-5).